Consider the following 511-residue polypeptide: Histidine ammonia-lyase (511 aa).

The segment at residues 142–144 (ASG) is a cross-link (5-imidazolinone (Ala-Gly)). Serine 143 carries the post-translational modification 2,3-didehydroalanine (Ser).

This sequence belongs to the PAL/histidase family. Post-translationally, contains an active site 4-methylidene-imidazol-5-one (MIO), which is formed autocatalytically by cyclization and dehydration of residues Ala-Ser-Gly.

It is found in the cytoplasm. It catalyses the reaction L-histidine = trans-urocanate + NH4(+). The protein operates within amino-acid degradation; L-histidine degradation into L-glutamate; N-formimidoyl-L-glutamate from L-histidine: step 1/3. This Rhizobium rhizogenes (strain K84 / ATCC BAA-868) (Agrobacterium radiobacter) protein is Histidine ammonia-lyase.